We begin with the raw amino-acid sequence, 305 residues long: GTPase Era (305 aa).

Residues 11-181 (RSGFVSFVGR…IKVMTDLLPE (171 aa)) enclose the Era-type G domain. Residues 19–26 (GRPNTGKS) form a G1 region. 19 to 26 (GRPNTGKS) lines the GTP pocket. A G2 region spans residues 45-49 (ETTRH). The tract at residues 66–69 (DTPG) is G3. Residues 66 to 70 (DTPGL) and 130 to 133 (TKAD) contribute to the GTP site. Residues 130-133 (TKAD) form a G4 region. Positions 160 to 162 (VSS) are G5. A KH type-2 domain is found at 212–291 (LKNELPHSVA…FLDLRIKVLK (80 aa)).

It belongs to the TRAFAC class TrmE-Era-EngA-EngB-Septin-like GTPase superfamily. Era GTPase family. As to quaternary structure, monomer.

It localises to the cytoplasm. The protein resides in the cell membrane. In terms of biological role, an essential GTPase that binds both GDP and GTP, with rapid nucleotide exchange. Plays a role in 16S rRNA processing and 30S ribosomal subunit biogenesis and possibly also in cell cycle regulation and energy metabolism. The protein is GTPase Era of Corynebacterium glutamicum (strain ATCC 13032 / DSM 20300 / JCM 1318 / BCRC 11384 / CCUG 27702 / LMG 3730 / NBRC 12168 / NCIMB 10025 / NRRL B-2784 / 534).